The following is a 332-amino-acid chain: Monoterpene synthase 25 (332 aa).

Asp115, Glu180, Asn240, Ser244, and Glu248 together coordinate Mg(2+). Positions 115–121 (DDPVVFD) match the DDXXXXD motif motif. Positions 240–248 (NDILSFYKE) match the NSE/DTE motif motif.

Belongs to the trichodiene synthase family. Mg(2+) serves as cofactor.

Terpene cyclase that catalyzes the cyclization of geranyl diphosphate (GPP) to myrcene and linalool. The polypeptide is Monoterpene synthase 25 (Postia placenta (strain ATCC 44394 / Madison 698-R) (Brown rot fungus)).